The sequence spans 141 residues: ATP synthase epsilon chain 1 (141 aa).

It belongs to the ATPase epsilon chain family. As to quaternary structure, F-type ATPases have 2 components, CF(1) - the catalytic core - and CF(0) - the membrane proton channel. CF(1) has five subunits: alpha(3), beta(3), gamma(1), delta(1), epsilon(1). CF(0) has three main subunits: a, b and c.

It localises to the cell inner membrane. Functionally, produces ATP from ADP in the presence of a proton gradient across the membrane. In Thiobacillus denitrificans (strain ATCC 25259 / T1), this protein is ATP synthase epsilon chain 1.